Here is a 331-residue protein sequence, read N- to C-terminus: Glutaminase-asparaginase (331 aa).

The 330-residue stretch at 2–331 folds into the Asparaginase/glutaminase domain; sequence NNVVIVATGG…KEIQNMFWNY (330 aa). T12 functions as the Acyl-ester intermediate in the catalytic mechanism. Substrate is bound by residues S59 and 92–93; that span reads TD.

It belongs to the asparaginase 1 family. As to quaternary structure, homotetramer.

The protein localises to the periplasm. The catalysed reaction is L-glutamine + H2O = L-glutamate + NH4(+). It catalyses the reaction L-asparagine + H2O = L-aspartate + NH4(+). This is Glutaminase-asparaginase (ansB) from Acinetobacter glutaminasificans.